The primary structure comprises 106 residues: Urease subunit beta (106 aa).

It belongs to the urease beta subunit family. As to quaternary structure, heterotrimer of UreA (gamma), UreB (beta) and UreC (alpha) subunits. Three heterotrimers associate to form the active enzyme.

It is found in the cytoplasm. It carries out the reaction urea + 2 H2O + H(+) = hydrogencarbonate + 2 NH4(+). It participates in nitrogen metabolism; urea degradation; CO(2) and NH(3) from urea (urease route): step 1/1. The polypeptide is Urease subunit beta (Prochlorococcus marinus subsp. pastoris (strain CCMP1986 / NIES-2087 / MED4)).